Here is a 192-residue protein sequence, read N- to C-terminus: Holliday junction branch migration complex subunit RuvA (192 aa).

Residues 1 to 61 (MFEYLKGIVA…DTGITLYGFL (61 aa)) form a domain I region. The domain II stretch occupies residues 62-137 (SLEDKELFLK…KLGDYVKKSA (76 aa)). The flexible linker stretch occupies residues 137–140 (AVAT). Residues 141-192 (DLTPSLQDALLALVALGYTQKEVDRITPKLAKLPENTADGYIKEALALLLKK) form a domain III region.

It belongs to the RuvA family. In terms of assembly, homotetramer. Forms an RuvA(8)-RuvB(12)-Holliday junction (HJ) complex. HJ DNA is sandwiched between 2 RuvA tetramers; dsDNA enters through RuvA and exits via RuvB. An RuvB hexamer assembles on each DNA strand where it exits the tetramer. Each RuvB hexamer is contacted by two RuvA subunits (via domain III) on 2 adjacent RuvB subunits; this complex drives branch migration. In the full resolvosome a probable DNA-RuvA(4)-RuvB(12)-RuvC(2) complex forms which resolves the HJ.

It localises to the cytoplasm. Its function is as follows. The RuvA-RuvB-RuvC complex processes Holliday junction (HJ) DNA during genetic recombination and DNA repair, while the RuvA-RuvB complex plays an important role in the rescue of blocked DNA replication forks via replication fork reversal (RFR). RuvA specifically binds to HJ cruciform DNA, conferring on it an open structure. The RuvB hexamer acts as an ATP-dependent pump, pulling dsDNA into and through the RuvAB complex. HJ branch migration allows RuvC to scan DNA until it finds its consensus sequence, where it cleaves and resolves the cruciform DNA. The polypeptide is Holliday junction branch migration complex subunit RuvA (Lactobacillus gasseri (strain ATCC 33323 / DSM 20243 / BCRC 14619 / CIP 102991 / JCM 1131 / KCTC 3163 / NCIMB 11718 / NCTC 13722 / AM63)).